A 126-amino-acid polypeptide reads, in one-letter code: Glycine cleavage system H protein (126 aa).

In terms of domain architecture, Lipoyl-binding spans 21–103; that stretch reads TVTVGISDHA…YESGWIARIK (83 aa). The residue at position 62 (Lys-62) is an N6-lipoyllysine.

It belongs to the GcvH family. In terms of assembly, the glycine cleavage system is composed of four proteins: P, T, L and H. (R)-lipoate serves as cofactor.

Functionally, the glycine cleavage system catalyzes the degradation of glycine. The H protein shuttles the methylamine group of glycine from the P protein to the T protein. The chain is Glycine cleavage system H protein from Aliivibrio fischeri (strain ATCC 700601 / ES114) (Vibrio fischeri).